We begin with the raw amino-acid sequence, 388 residues long: Xylose isomerase (388 aa).

Catalysis depends on residues H54 and D57. Residues E181, E217, H220, D245, D255, D257, and D287 each contribute to the Mg(2+) site.

It belongs to the xylose isomerase family. In terms of assembly, homotetramer. The cofactor is Mg(2+).

Its subcellular location is the cytoplasm. The enzyme catalyses alpha-D-xylose = alpha-D-xylulofuranose. In terms of biological role, involved in D-xylose catabolism. The protein is Xylose isomerase (xylA) of Streptomyces murinus.